The following is a 73-amino-acid chain: Large ribosomal subunit protein bL31 (73 aa).

This sequence belongs to the bacterial ribosomal protein bL31 family. Type A subfamily. As to quaternary structure, part of the 50S ribosomal subunit.

Its function is as follows. Binds the 23S rRNA. This is Large ribosomal subunit protein bL31 from Ruegeria sp. (strain TM1040) (Silicibacter sp.).